Consider the following 237-residue polypeptide: Demethylmenaquinone methyltransferase (237 aa).

Residues Thr-58, Asp-79, and 106–107 (NA) each bind S-adenosyl-L-methionine.

Belongs to the class I-like SAM-binding methyltransferase superfamily. MenG/UbiE family.

The catalysed reaction is a 2-demethylmenaquinol + S-adenosyl-L-methionine = a menaquinol + S-adenosyl-L-homocysteine + H(+). It functions in the pathway quinol/quinone metabolism; menaquinone biosynthesis; menaquinol from 1,4-dihydroxy-2-naphthoate: step 2/2. Methyltransferase required for the conversion of demethylmenaquinol (DMKH2) to menaquinol (MKH2). In Bacillus cytotoxicus (strain DSM 22905 / CIP 110041 / 391-98 / NVH 391-98), this protein is Demethylmenaquinone methyltransferase.